A 400-amino-acid chain; its full sequence is Nicotinate phosphoribosyltransferase (400 aa).

Histidine 220 is subject to Phosphohistidine; by autocatalysis.

It belongs to the NAPRTase family. In terms of processing, transiently phosphorylated on a His residue during the reaction cycle. Phosphorylation strongly increases the affinity for substrates and increases the rate of nicotinate D-ribonucleotide production. Dephosphorylation regenerates the low-affinity form of the enzyme, leading to product release.

The catalysed reaction is nicotinate + 5-phospho-alpha-D-ribose 1-diphosphate + ATP + H2O = nicotinate beta-D-ribonucleotide + ADP + phosphate + diphosphate. It functions in the pathway cofactor biosynthesis; NAD(+) biosynthesis; nicotinate D-ribonucleotide from nicotinate: step 1/1. Functionally, catalyzes the synthesis of beta-nicotinate D-ribonucleotide from nicotinate and 5-phospho-D-ribose 1-phosphate at the expense of ATP. The sequence is that of Nicotinate phosphoribosyltransferase from Salmonella heidelberg (strain SL476).